The sequence spans 231 residues: Large ribosomal subunit protein uL1 (231 aa).

Belongs to the universal ribosomal protein uL1 family. Part of the 50S ribosomal subunit.

In terms of biological role, binds directly to 23S rRNA. The L1 stalk is quite mobile in the ribosome, and is involved in E site tRNA release. Functionally, protein L1 is also a translational repressor protein, it controls the translation of the L11 operon by binding to its mRNA. In Dechloromonas aromatica (strain RCB), this protein is Large ribosomal subunit protein uL1.